We begin with the raw amino-acid sequence, 578 residues long: Longifolene synthase (578 aa).

Residues D331, D335, and D475 each coordinate Mg(2+). The DDXXD motif signature appears at 331–335 (DDLYD).

This sequence belongs to the terpene synthase family. Tpsd subfamily. The cofactor is Mg(2+). Mn(2+) serves as cofactor.

It catalyses the reaction (2E,6E)-farnesyl diphosphate = longifolene + diphosphate. It functions in the pathway sesquiterpene biosynthesis. It participates in terpene metabolism; oleoresin biosynthesis. Its function is as follows. Terpene synthase (TPS) involved in the biosynthesis of sesquiterpene natural products included in conifer oleoresin secretions and volatile emissions; these compounds contribute to biotic and abiotic stress defense against herbivores and pathogens. Catalyzes the conversion of (2E,6E)-farnesyl diphosphate (FPP) to longifolene. This Picea engelmannii x Picea glauca (Hybrid white spruce) protein is Longifolene synthase.